The chain runs to 1219 residues: DNA ligase 4 (1219 aa).

Residues Glu251, Lys253, Arg258, Arg273, Glu303, Phe342, Glu418, Lys423, Arg434, Lys440, and Lys442 each contribute to the ATP site. The N6-AMP-lysine intermediate role is filled by Lys253. Glu303 lines the Mg(2+) pocket. Glu418 is a Mg(2+) binding site. Positions 604-632 (NGTTQKQKESESTQDNPKVNKSSKRGEKK) are disordered. 2 BRCT domains span residues 651–739 (GKTS…PKYF) and 807–909 (VYFY…VYTL). Disordered regions lie at residues 914–1126 (MEES…MDMK) and 1146–1197 (IPSQ…SDVV). Over residues 932–960 (VASQGSAQTKEPASSKIAITSSRGRSNTR) the composition is skewed to polar residues. Over residues 1042–1051 (QRSRRGKKAA) the composition is skewed to basic residues. Positions 1056–1065 (DESDENDELD) are enriched in acidic residues. Basic and acidic residues-rich tracts occupy residues 1084–1096 (VENE…DIAK) and 1117–1126 (RNAKTEMDMK). Polar residues predominate over residues 1148-1159 (SQKTTETSNRTT).

The protein belongs to the ATP-dependent DNA ligase family. Interacts with XRCC4 via its tandem BRCT domains. Interacts with POLL. It depends on Mg(2+) as a cofactor. In terms of tissue distribution, widely expressed, with higher levels in young flowers and roots.

The protein localises to the nucleus. It carries out the reaction ATP + (deoxyribonucleotide)n-3'-hydroxyl + 5'-phospho-(deoxyribonucleotide)m = (deoxyribonucleotide)n+m + AMP + diphosphate.. DNA ligase involved in DNA non-homologous end joining (NHEJ); required for double-strand break (DSB) repair. May be involved for T-DNA integration even if not absolutely required. Seems to be dispensable under normal growth conditions. This Arabidopsis thaliana (Mouse-ear cress) protein is DNA ligase 4 (LIG4).